A 92-amino-acid chain; its full sequence is Defensin Lucifensin (92 aa).

The first 23 residues, 1–23, serve as a signal peptide directing secretion; that stretch reads MKFFMVFAVTFCLALSFVSQSLA. A propeptide spanning residues 24–52 is cleaved from the precursor; the sequence is LPADDEAHFVDGLEALKTIEPELHGRYKR. 3 disulfides stabilise this stretch: Cys-55–Cys-82, Cys-68–Cys-88, and Cys-72–Cys-90.

The protein belongs to the invertebrate defensin family. Type 1 subfamily. In terms of processing, the disulfide bonds are essential for antimicrobial activity. In terms of tissue distribution, larval fat body, hemolymph and salivary glands (at protein level). Expressed in the salivary glands of all larval stages.

The protein resides in the secreted. It localises to the host cell membrane. In terms of biological role, shows strong antibacterial activity against numerous Gram-positive bacteria. It selectively inhibits peptidoglycan biosynthesis through complex formation with the cell wall precursor lipid II (1:1 molar ratio) thus inhibiting cell wall synthesis. Shows antibacterial activity against the Gram-positive bacteria M.luteus, E.fecalis (MIC=32 mg/L), S.aureus (MIC=16 mg/L), S.carnosus (MIC=2 mg/L), S.pneumoniae (MIC=2 mg/L) and S.pyogenes (MIC=2 mg/L) and against a number of methicillin-resistant S.aureus and glycopeptide-intermediate S.aureus isolates. Does not show antibacterial activity against Gram-negative bacteria or antifungal activity against C.utilis. Shows slight antifungal activity against C.albicans. This chain is Defensin Lucifensin, found in Lucilia sericata (Green bottle fly).